Consider the following 692-residue polypeptide: Proprotein convertase subtilisin/kexin type 9 (692 aa).

The first 30 residues, 1–30 (MGTVSSRRSWWPLPLPLLLLLLLGPAGARA), serve as a signal peptide directing secretion. The propeptide occupies 31–152 (QEDEDGDYEE…IEEDSSVFAQ (122 aa)). A Sulfotyrosine modification is found at tyrosine 38. Position 47 is a phosphoserine (serine 47). Residues 77 to 149 (TYVVVLKEET…VDYIEEDSSV (73 aa)) enclose the Inhibitor I9 domain. One can recognise a Peptidase S8 domain in the interval 155–444 (PWNLERITPA…VLTPNLVAAL (290 aa)). Active-site charge relay system residues include aspartate 186 and histidine 226. Disulfide bonds link cysteine 223-cysteine 255 and cysteine 323-cysteine 358. Serine 386 serves as the catalytic Charge relay system. Positions 450-692 (RAGWQLFCRT…HLVQASQELQ (243 aa)) are C-terminal domain. Intrachain disulfides connect cysteine 457/cysteine 527, cysteine 477/cysteine 526, and cysteine 486/cysteine 509. N-linked (GlcNAc...) asparagine glycosylation is present at asparagine 533. Intrachain disulfides connect cysteine 534-cysteine 601, cysteine 552-cysteine 600, cysteine 562-cysteine 588, cysteine 608-cysteine 679, cysteine 626-cysteine 678, and cysteine 635-cysteine 654. Serine 688 is subject to Phosphoserine.

It belongs to the peptidase S8 family. In terms of assembly, monomer. Can self-associate to form dimers and higher multimers which may have increased LDLR degrading activity. The precursor protein but not the mature protein may form multimers. Interacts with APOB, VLDLR, LRP8/APOER2 and BACE1. The full-length immature form (pro-PCSK9) interacts with SCNN1A, SCNN1B and SCNN1G. The pro-PCSK9 form (via C-terminal domain) interacts with LDLR. Interacts (via the C-terminal domain) with ANXA2 (via repeat Annexin 1); the interaction inhibits the degradation of LDLR. It depends on Ca(2+) as a cofactor. Post-translationally, cleavage by furin and PCSK5 generates a truncated inactive protein that is unable to induce LDLR degradation. In terms of processing, undergoes autocatalytic cleavage in the endoplasmic reticulum to release the propeptide from the N-terminus and the cleavage of the propeptide is strictly required for its maturation and activation. The cleaved propeptide however remains associated with the catalytic domain through non-covalent interactions, preventing potential substrates from accessing its active site. As a result, it is secreted from cells as a propeptide-containing, enzymatically inactive protein. Phosphorylation protects the propeptide against proteolysis.

Its subcellular location is the cytoplasm. It is found in the secreted. The protein localises to the endosome. The protein resides in the lysosome. It localises to the cell surface. Its subcellular location is the endoplasmic reticulum. It is found in the golgi apparatus. Its proteolytic activity is autoinhibited by the non-covalent binding of the propeptide to the catalytic domain. Inhibited by EGTA. Crucial player in the regulation of plasma cholesterol homeostasis. Binds to low-density lipid receptor family members: low density lipoprotein receptor (LDLR), very low density lipoprotein receptor (VLDLR), apolipoprotein E receptor (LRP1/APOER) and apolipoprotein receptor 2 (LRP8/APOER2), and promotes their degradation in intracellular acidic compartments. Acts via a non-proteolytic mechanism to enhance the degradation of the hepatic LDLR through a clathrin LDLRAP1/ARH-mediated pathway. May prevent the recycling of LDLR from endosomes to the cell surface or direct it to lysosomes for degradation. Can induce ubiquitination of LDLR leading to its subsequent degradation. Inhibits intracellular degradation of APOB via the autophagosome/lysosome pathway in a LDLR-independent manner. Involved in the disposal of non-acetylated intermediates of BACE1 in the early secretory pathway. Inhibits epithelial Na(+) channel (ENaC)-mediated Na(+) absorption by reducing ENaC surface expression primarily by increasing its proteasomal degradation. Regulates neuronal apoptosis via modulation of LRP8/APOER2 levels and related anti-apoptotic signaling pathways. In Macaca mulatta (Rhesus macaque), this protein is Proprotein convertase subtilisin/kexin type 9 (PCSK9).